A 138-amino-acid chain; its full sequence is Small ribosomal subunit protein uS11 (138 aa).

Disordered stretches follow at residues 1–29 (MPPK…PHGA) and 117–138 (GAIS…RRRV). Residues 13–22 (KGQKTRRREK) are compositionally biased toward basic residues.

This sequence belongs to the universal ribosomal protein uS11 family. Part of the 30S ribosomal subunit. Interacts with proteins S7 and S18. Binds to IF-3.

Its function is as follows. Located on the platform of the 30S subunit, it bridges several disparate RNA helices of the 16S rRNA. Forms part of the Shine-Dalgarno cleft in the 70S ribosome. The sequence is that of Small ribosomal subunit protein uS11 from Mycobacterium ulcerans (strain Agy99).